A 226-amino-acid chain; its full sequence is Putative methyltransferase RP459 (226 aa).

The protein belongs to the methyltransferase superfamily.

The sequence is that of Putative methyltransferase RP459 from Rickettsia prowazekii (strain Madrid E).